Consider the following 79-residue polypeptide: Pyridoxal 5'-phosphate synthase PDX1-like 4 (79 aa).

This sequence belongs to the PdxS/SNZ family.

The sequence is that of Pyridoxal 5'-phosphate synthase PDX1-like 4 (PDX1L4) from Arabidopsis thaliana (Mouse-ear cress).